A 174-amino-acid polypeptide reads, in one-letter code: Flavodoxin 1 (174 aa).

Positions 4 to 168 constitute a Flavodoxin-like domain; sequence IGIFYGSSSG…RLERWIAVLQ (165 aa). Residues 10-14 and 89-122 each bind FMN; these read SSSGV and LFGA…ALVG.

FMN is required as a cofactor.

Flavodoxins are low-potential electron donors to a number of redox enzymes. AvFld 1 is able to donate electrons to the assimilatory nitrate reductase of A.vinelandii to catalyze the reduction of nitrate to nitrite. The chain is Flavodoxin 1 from Azotobacter vinelandii (strain DJ / ATCC BAA-1303).